Reading from the N-terminus, the 353-residue chain is Anthranilate phosphoribosyltransferase (353 aa).

5-phospho-alpha-D-ribose 1-diphosphate-binding positions include Gly86, 89–90, 96–99, 114–122, and Ser126; these read GD, NVST, and KHGNRAVSG. Position 86 (Gly86) interacts with anthranilate. Ser98 is a binding site for Mg(2+). Asn117 contributes to the anthranilate binding site. Anthranilate is bound at residue Arg172. Residues Asp231 and Glu232 each coordinate Mg(2+).

This sequence belongs to the anthranilate phosphoribosyltransferase family. Homodimer. It depends on Mg(2+) as a cofactor.

It carries out the reaction N-(5-phospho-beta-D-ribosyl)anthranilate + diphosphate = 5-phospho-alpha-D-ribose 1-diphosphate + anthranilate. The protein operates within amino-acid biosynthesis; L-tryptophan biosynthesis; L-tryptophan from chorismate: step 2/5. Catalyzes the transfer of the phosphoribosyl group of 5-phosphorylribose-1-pyrophosphate (PRPP) to anthranilate to yield N-(5'-phosphoribosyl)-anthranilate (PRA). The sequence is that of Anthranilate phosphoribosyltransferase from Pseudomonas syringae pv. syringae (strain B728a).